Consider the following 73-residue polypeptide: Translation initiation factor IF-1 (73 aa).

The S1-like domain occupies 1–73 (MAKKDGAIEV…SRGRIVYRYK (73 aa)).

It belongs to the IF-1 family. In terms of assembly, component of the 30S ribosomal translation pre-initiation complex which assembles on the 30S ribosome in the order IF-2 and IF-3, IF-1 and N-formylmethionyl-tRNA(fMet); mRNA recruitment can occur at any time during PIC assembly.

The protein localises to the cytoplasm. Functionally, one of the essential components for the initiation of protein synthesis. Stabilizes the binding of IF-2 and IF-3 on the 30S subunit to which N-formylmethionyl-tRNA(fMet) subsequently binds. Helps modulate mRNA selection, yielding the 30S pre-initiation complex (PIC). Upon addition of the 50S ribosomal subunit IF-1, IF-2 and IF-3 are released leaving the mature 70S translation initiation complex. This is Translation initiation factor IF-1 from Mycobacterium avium (strain 104).